Reading from the N-terminus, the 498-residue chain is Galactose-1-phosphate uridylyltransferase (498 aa).

Belongs to the galactose-1-phosphate uridylyltransferase type 2 family.

The protein localises to the cytoplasm. The enzyme catalyses alpha-D-galactose 1-phosphate + UDP-alpha-D-glucose = alpha-D-glucose 1-phosphate + UDP-alpha-D-galactose. The protein operates within carbohydrate metabolism; galactose metabolism. The polypeptide is Galactose-1-phosphate uridylyltransferase (Clostridium perfringens (strain 13 / Type A)).